A 349-amino-acid polypeptide reads, in one-letter code: ATP synthase subunit a-2 (349 aa).

Residues 1–97 constitute a propeptide that is removed on maturation; sequence MERLTRLNHF…SNYMKLMEIP (97 aa). 7 helical membrane passes run 118–138, 184–204, 213–233, 240–260, 280–300, 303–323, and 326–346; these read FSFT…LLLI, FFPC…QGMI, HFLI…IVGF, FFSF…LVLL, MMAG…MLCM, IFYF…TGLE, and VAIL…NDAI.

Belongs to the ATPase A chain family. In terms of assembly, F-type ATPases have 2 components, CF(1) - the catalytic core - and CF(0) - the membrane proton channel. CF(1) has five subunits: alpha(3), beta(3), gamma(1), delta(1), epsilon(1). CF(0) has three main subunits: a, b and c.

The protein resides in the mitochondrion inner membrane. Its function is as follows. Mitochondrial membrane ATP synthase (F(1)F(0) ATP synthase or Complex V) produces ATP from ADP in the presence of a proton gradient across the membrane which is generated by electron transport complexes of the respiratory chain. F-type ATPases consist of two structural domains, F(1) - containing the extramembraneous catalytic core and F(0) - containing the membrane proton channel, linked together by a central stalk and a peripheral stalk. During catalysis, ATP synthesis in the catalytic domain of F(1) is coupled via a rotary mechanism of the central stalk subunits to proton translocation. Key component of the proton channel; it may play a direct role in the translocation of protons across the membrane. The protein is ATP synthase subunit a-2 (ATP6-2) of Arabidopsis thaliana (Mouse-ear cress).